A 79-amino-acid polypeptide reads, in one-letter code: UPF0175 protein APE_0890a.1 (79 aa).

It belongs to the UPF0175 family.

In Aeropyrum pernix (strain ATCC 700893 / DSM 11879 / JCM 9820 / NBRC 100138 / K1), this protein is UPF0175 protein APE_0890a.1.